We begin with the raw amino-acid sequence, 160 residues long: Cytochrome b6-f complex subunit 4 (160 aa).

3 consecutive transmembrane segments (helical) span residues 36 to 56 (LLYV…GLAV), 95 to 115 (LLGV…PFIE), and 131 to 151 (LVFI…CLPI).

Belongs to the cytochrome b family. PetD subfamily. The 4 large subunits of the cytochrome b6-f complex are cytochrome b6, subunit IV (17 kDa polypeptide, petD), cytochrome f and the Rieske protein, while the 4 small subunits are petG, petL, petM and petN. The complex functions as a dimer.

Its subcellular location is the plastid. The protein resides in the chloroplast thylakoid membrane. In terms of biological role, component of the cytochrome b6-f complex, which mediates electron transfer between photosystem II (PSII) and photosystem I (PSI), cyclic electron flow around PSI, and state transitions. The polypeptide is Cytochrome b6-f complex subunit 4 (Trieres chinensis (Marine centric diatom)).